An 894-amino-acid polypeptide reads, in one-letter code: Leucine--tRNA ligase, mitochondrial (894 aa).

The N-terminal 9 residues, 1–9 (MLSRPSSRF), are a transit peptide targeting the mitochondrion. A 'HIGH' region motif is present at residues 56–66 (PYPSGALHIGH). Residues 646–650 (KMSKS) carry the 'KMSKS' region motif. Position 649 (lysine 649) interacts with ATP.

This sequence belongs to the class-I aminoacyl-tRNA synthetase family.

The protein localises to the mitochondrion matrix. The catalysed reaction is tRNA(Leu) + L-leucine + ATP = L-leucyl-tRNA(Leu) + AMP + diphosphate. Catalyzes the attachment of leucine to tRNA(Leu) in the mitochondrion. This Saccharomyces cerevisiae (strain ATCC 204508 / S288c) (Baker's yeast) protein is Leucine--tRNA ligase, mitochondrial (NAM2).